Here is a 161-residue protein sequence, read N- to C-terminus: Phosphopantetheine adenylyltransferase (161 aa).

Position 8 (Ser8) interacts with substrate. Residues 8–9 (SF) and His16 each bind ATP. Residues Lys40, Thr72, and Arg86 each contribute to the substrate site. ATP contacts are provided by residues 87–89 (GLR), Glu97, and 122–128 (HSFLSSS).

The protein belongs to the bacterial CoaD family. In terms of assembly, homohexamer. It depends on Mg(2+) as a cofactor.

The protein resides in the cytoplasm. The catalysed reaction is (R)-4'-phosphopantetheine + ATP + H(+) = 3'-dephospho-CoA + diphosphate. Its pathway is cofactor biosynthesis; coenzyme A biosynthesis; CoA from (R)-pantothenate: step 4/5. Functionally, reversibly transfers an adenylyl group from ATP to 4'-phosphopantetheine, yielding dephospho-CoA (dPCoA) and pyrophosphate. The polypeptide is Phosphopantetheine adenylyltransferase (Gloeobacter violaceus (strain ATCC 29082 / PCC 7421)).